The following is a 197-amino-acid chain: Auxin-responsive protein IAA31 (197 aa).

2 disordered regions span residues 1–43 (MENL…DQAK) and 66–90 (SCLQ…ETQQ). Positions 9–13 (LRLGL) match the EAR-like (transcriptional repression) motif. In terms of domain architecture, PB1 spans 99–186 (GLFVKVSMDG…TCKRLRIMKG (88 aa)).

This sequence belongs to the Aux/IAA family. As to quaternary structure, homodimers and heterodimers. As to expression, highly expressed in etiolated seedlings. Expressed in roots.

The protein localises to the nucleus. Aux/IAA proteins are short-lived transcriptional factors that function as repressors of early auxin response genes at low auxin concentrations. In Oryza sativa subsp. japonica (Rice), this protein is Auxin-responsive protein IAA31 (IAA31).